A 706-amino-acid polypeptide reads, in one-letter code: Ribosomal RNA large subunit methyltransferase K/L (706 aa).

The THUMP domain occupies 43-154 (LMYQSLLWSR…RDMASVALDL (112 aa)).

Belongs to the methyltransferase superfamily. RlmKL family.

It localises to the cytoplasm. The enzyme catalyses guanosine(2445) in 23S rRNA + S-adenosyl-L-methionine = N(2)-methylguanosine(2445) in 23S rRNA + S-adenosyl-L-homocysteine + H(+). It carries out the reaction guanosine(2069) in 23S rRNA + S-adenosyl-L-methionine = N(2)-methylguanosine(2069) in 23S rRNA + S-adenosyl-L-homocysteine + H(+). Specifically methylates the guanine in position 2445 (m2G2445) and the guanine in position 2069 (m7G2069) of 23S rRNA. This Yersinia enterocolitica serotype O:8 / biotype 1B (strain NCTC 13174 / 8081) protein is Ribosomal RNA large subunit methyltransferase K/L.